The following is a 156-amino-acid chain: Transcription antitermination protein NusB (156 aa).

This sequence belongs to the NusB family.

Its function is as follows. Involved in transcription antitermination. Required for transcription of ribosomal RNA (rRNA) genes. Binds specifically to the boxA antiterminator sequence of the ribosomal RNA (rrn) operons. The sequence is that of Transcription antitermination protein NusB from Rickettsia conorii (strain ATCC VR-613 / Malish 7).